The primary structure comprises 235 residues: tRNA (guanine-N(1)-)-methyltransferase (235 aa).

S-adenosyl-L-methionine contacts are provided by residues glycine 114 and 134–139 (IGDYIL).

Belongs to the RNA methyltransferase TrmD family. As to quaternary structure, homodimer.

It is found in the cytoplasm. The enzyme catalyses guanosine(37) in tRNA + S-adenosyl-L-methionine = N(1)-methylguanosine(37) in tRNA + S-adenosyl-L-homocysteine + H(+). Specifically methylates guanosine-37 in various tRNAs. In Ehrlichia ruminantium (strain Welgevonden), this protein is tRNA (guanine-N(1)-)-methyltransferase.